A 124-amino-acid chain; its full sequence is V-type proton ATPase subunit F 1 (124 aa).

A Phosphoserine modification is found at S87.

It belongs to the V-ATPase F subunit family. V-ATPase is a heteromultimeric enzyme made up of two complexes: the ATP-hydrolytic V1 complex and the proton translocation V0 complex. The V1 complex consists of three catalytic AB heterodimers that form a heterohexamer, three peripheral stalks each consisting of EG heterodimers, one central rotor including subunits D and F, and the regulatory subunits C and H. The proton translocation complex V0 consists of the proton transport subunit a, a ring of proteolipid subunits c9c'', rotary subunit d, subunits e and f, and the accessory subunits VhaAC45 and ATP6AP2.

Its function is as follows. Subunit of the V1 complex of vacuolar(H+)-ATPase (V-ATPase), a multisubunit enzyme composed of a peripheral complex (V1) that hydrolyzes ATP and a membrane integral complex (V0) that translocates protons. V-ATPase is responsible for acidifying and maintaining the pH of intracellular compartments and in some cell types, is targeted to the plasma membrane, where it is responsible for acidifying the extracellular environment. The protein is V-type proton ATPase subunit F 1 (Vha14-1) of Drosophila melanogaster (Fruit fly).